The chain runs to 206 residues: Uridine kinase (206 aa).

11–18 (GGSASGKT) is a binding site for ATP.

The protein belongs to the uridine kinase family.

The protein localises to the cytoplasm. It catalyses the reaction uridine + ATP = UMP + ADP + H(+). It carries out the reaction cytidine + ATP = CMP + ADP + H(+). It participates in pyrimidine metabolism; CTP biosynthesis via salvage pathway; CTP from cytidine: step 1/3. The protein operates within pyrimidine metabolism; UMP biosynthesis via salvage pathway; UMP from uridine: step 1/1. The chain is Uridine kinase from Lactococcus lactis subsp. lactis (strain IL1403) (Streptococcus lactis).